The sequence spans 271 residues: Chymotrypsin BII (271 aa).

An N-terminal signal peptide occupies residues 1-15 (MIGKLSLLLVCVAVA). The propeptide at 16–45 (SGNPAAGKPWHWKSPKPLVDPRIHVNATPR) is activation peptide. One can recognise a Peptidase S1 domain in the interval 46–268 (IVGGVEATPH…YLDWIEQKTG (223 aa)). Cys-71 and Cys-87 are oxidised to a cystine. Residues His-86 and Asp-132 each act as charge relay system in the active site. Intrachain disulfides connect Cys-196–Cys-209 and Cys-219–Cys-245. The active-site Charge relay system is Ser-223.

Belongs to the peptidase S1 family.

The protein localises to the secreted. It localises to the extracellular space. It catalyses the reaction Preferential cleavage: Tyr-|-Xaa, Trp-|-Xaa, Phe-|-Xaa, Leu-|-Xaa.. Functionally, serine protease with chymotryptic and collagenolytic activities. The polypeptide is Chymotrypsin BII (Penaeus vannamei (Whiteleg shrimp)).